The chain runs to 60 residues: Alpha-conotoxin-like 289 (60 aa).

The first 16 residues, 1–16 (MFTVFLLVVLATTVVS), serve as a signal peptide directing secretion. Residues 17–42 (FTSDRAFRGRNAAAKASGLVGLTDKR) constitute a propeptide that is removed on maturation. A Pyrrolidone carboxylic acid modification is found at Gln-43. Disulfide bonds link Cys-45-Cys-51 and Cys-46-Cys-59. A ser-Xaa-Pro motif, crucial for potent interaction with nAChR region spans residues 47–49 (SYP). Cys-59 is modified (cysteine amide).

The protein belongs to the conotoxin A superfamily. In terms of tissue distribution, expressed by the venom duct.

Its subcellular location is the secreted. Functionally, alpha-conotoxins act on postsynaptic membranes, they bind to the nicotinic acetylcholine receptors (nAChR) and thus inhibit them. This Conus ammiralis (Admiral cone) protein is Alpha-conotoxin-like 289.